Here is a 160-residue protein sequence, read N- to C-terminus: Type-1 angiotensin II receptor-associated protein (160 aa).

Over 1-9 (MELPAVNLK) the chain is Extracellular. Residues 10 to 30 (VILLVHWLLTTWGCLAFSGSY) traverse the membrane as a helical segment. Over 31–53 (AWGNFTILALGVWAVAQRDSVDA) the chain is Cytoplasmic. Residues 54–74 (IGMFLGGLVATIFLDIIYISI) traverse the membrane as a helical segment. Topologically, residues 75-86 (FYSSVAVGDTGR) are extracellular. Residues 87–107 (FSAGMAIFSLLLKPFSCCLVY) traverse the membrane as a helical segment. The Cytoplasmic portion of the chain corresponds to 108–160 (HMHRERGGELPLRSDFFGPSQEHSAYQTIDSSDSPADPLASLENKGQAAPRGY). Residues 110–122 (HRERGGELPLRSD) are interaction with AGTR1. Ser127 carries the post-translational modification Phosphoserine. The segment at 128-160 (QEHSAYQTIDSSDSPADPLASLENKGQAAPRGY) is disordered. Thr135 bears the Phosphothreonine mark. Low complexity predominate over residues 137–149 (DSSDSPADPLASL). A Phosphoserine modification is found at Ser138.

Interacts with RACK1, and with the carboxy-terminal region of AGTR1.

Its subcellular location is the endoplasmic reticulum membrane. It localises to the golgi apparatus membrane. It is found in the cytoplasmic vesicle membrane. Functionally, appears to be a negative regulator of type-1 angiotensin II receptor-mediated signaling by regulating receptor internalization as well as mechanism of receptor desensitization such as phosphorylation. May play a role of negative regulator in cardiomyocyte hypertrophy induced by angiotensin II through an inhibition of p38 mitogen-activated protein kinase pathway. Attenuates type-1 angiotensin II receptor growth promoting effect and angiotensin II-induced phosphorylation of protein kinase AKT and of STAT3. The polypeptide is Type-1 angiotensin II receptor-associated protein (Agtrap) (Rattus norvegicus (Rat)).